The chain runs to 997 residues: LPS-assembly protein LptD (997 aa).

Positions 1-27 (MLYSPLYQSIRLILFGALGLSSLTVSA) are cleaved as a signal peptide.

It belongs to the LptD family. In terms of assembly, component of the lipopolysaccharide transport and assembly complex. Interacts with LptE and LptA.

Its subcellular location is the cell outer membrane. Functionally, together with LptE, is involved in the assembly of lipopolysaccharide (LPS) at the surface of the outer membrane. This is LPS-assembly protein LptD from Psychrobacter cryohalolentis (strain ATCC BAA-1226 / DSM 17306 / VKM B-2378 / K5).